Here is a 156-residue protein sequence, read N- to C-terminus: ATP synthase subunit b (156 aa).

A helical transmembrane segment spans residues 7 to 27 (LIGQAIWFALFVFFCMKFVWP).

Belongs to the ATPase B chain family. F-type ATPases have 2 components, F(1) - the catalytic core - and F(0) - the membrane proton channel. F(1) has five subunits: alpha(3), beta(3), gamma(1), delta(1), epsilon(1). F(0) has three main subunits: a(1), b(2) and c(10-14). The alpha and beta chains form an alternating ring which encloses part of the gamma chain. F(1) is attached to F(0) by a central stalk formed by the gamma and epsilon chains, while a peripheral stalk is formed by the delta and b chains.

The protein localises to the cell inner membrane. In terms of biological role, f(1)F(0) ATP synthase produces ATP from ADP in the presence of a proton or sodium gradient. F-type ATPases consist of two structural domains, F(1) containing the extramembraneous catalytic core and F(0) containing the membrane proton channel, linked together by a central stalk and a peripheral stalk. During catalysis, ATP synthesis in the catalytic domain of F(1) is coupled via a rotary mechanism of the central stalk subunits to proton translocation. Component of the F(0) channel, it forms part of the peripheral stalk, linking F(1) to F(0). This is ATP synthase subunit b from Alcanivorax borkumensis (strain ATCC 700651 / DSM 11573 / NCIMB 13689 / SK2).